Here is a 62-residue protein sequence, read N- to C-terminus: Photosystem II reaction center protein Z (62 aa).

2 helical membrane-spanning segments follow: residues 8-28 (AVFA…LVFA) and 41-61 (FSGT…NSLI).

It belongs to the PsbZ family. PSII is composed of 1 copy each of membrane proteins PsbA, PsbB, PsbC, PsbD, PsbE, PsbF, PsbH, PsbI, PsbJ, PsbK, PsbL, PsbM, PsbT, PsbY, PsbZ, Psb30/Ycf12, at least 3 peripheral proteins of the oxygen-evolving complex and a large number of cofactors. It forms dimeric complexes.

The protein localises to the plastid. Its subcellular location is the chloroplast thylakoid membrane. In terms of biological role, may control the interaction of photosystem II (PSII) cores with the light-harvesting antenna, regulates electron flow through the 2 photosystem reaction centers. PSII is a light-driven water plastoquinone oxidoreductase, using light energy to abstract electrons from H(2)O, generating a proton gradient subsequently used for ATP formation. The sequence is that of Photosystem II reaction center protein Z from Hordeum vulgare (Barley).